The chain runs to 1322 residues: Myosin-1 (1322 aa).

One can recognise a Myosin motor domain in the interval 42–728 (AGVSDMTLLT…TLFALETMRD (687 aa)). 135–142 (GESGAGKT) is an ATP binding site. The residue at position 369 (Ser369) is a Phosphoserine. The interval 417–499 (VIGVLDIYGF…PGIFSALNDA (83 aa)) is actin-binding. 2 consecutive IQ domains span residues 732–752 (HNMA…REES) and 753–778 (ARRI…YGHQ). The TH1 domain maps to 786-980 (RRRFSLISMR…SGEPPTSVSR (195 aa)). Disordered stretches follow at residues 966–1090 (IVSV…MPSY) and 1137–1162 (VQQL…ATPA). Low complexity-rich tracts occupy residues 1000 to 1017 (SRPV…PTTT) and 1027 to 1056 (GGTA…ASGA). Polar residues-rich tracts occupy residues 1078-1087 (PATSAPSSGM) and 1137-1148 (VQQLGSSSTAQT). In terms of domain architecture, SH3 spans 1184–1243 (RRLPRYRALYDFETQEAGELPLRTGDIVELEEKEENGWWLVKKGSTEGWSPADYLELIAE). Residues 1246 to 1300 (AAKPRPPPPAKPASAKPAAAPARVSQSSVTSSWTPPDSHAAPVAVMPGMGDPGGF) form a disordered region. Over residues 1257-1267 (PASAKPAAAPA) the composition is skewed to low complexity. The span at 1269-1280 (VSQSSVTSSWTP) shows a compositional bias: polar residues.

It belongs to the TRAFAC class myosin-kinesin ATPase superfamily. Myosin family. In terms of processing, phosphorylation of the TEDS site (Ser-369) is required for the polarization of the actin cytoskeleton. Phosphorylation probably activates the myosin-I ATPase activity.

Its subcellular location is the cytoplasm. The protein localises to the cytoskeleton. It localises to the actin patch. Functionally, type-I myosin implicated in the organization of the actin cytoskeleton. Required for proper actin cytoskeleton polarization. At the cell cortex, assembles in patch-like structures together with proteins from the actin-polymerizing machinery and promotes actin assembly. Functions as actin nucleation-promoting factor (NPF) for the Arp2/3 complex. This chain is Myosin-1 (MYO1), found in Malassezia globosa (strain ATCC MYA-4612 / CBS 7966) (Dandruff-associated fungus).